We begin with the raw amino-acid sequence, 317 residues long: Glutaminase (317 aa).

The substrate site is built by Ser-67, Asn-118, Glu-162, Asn-169, Tyr-193, Tyr-245, and Val-263.

This sequence belongs to the glutaminase family. As to quaternary structure, homotetramer.

It catalyses the reaction L-glutamine + H2O = L-glutamate + NH4(+). This Brucella canis (strain ATCC 23365 / NCTC 10854 / RM-666) protein is Glutaminase.